The chain runs to 214 residues: Probable septum site-determining protein MinC (214 aa).

This sequence belongs to the MinC family. Interacts with MinD and FtsZ.

Its function is as follows. Cell division inhibitor that blocks the formation of polar Z ring septums. Rapidly oscillates between the poles of the cell to destabilize FtsZ filaments that have formed before they mature into polar Z rings. Prevents FtsZ polymerization. This chain is Probable septum site-determining protein MinC, found in Caldanaerobacter subterraneus subsp. tengcongensis (strain DSM 15242 / JCM 11007 / NBRC 100824 / MB4) (Thermoanaerobacter tengcongensis).